We begin with the raw amino-acid sequence, 687 residues long: Acetyl-coenzyme A synthetase 2 (687 aa).

CoA is bound by residues 206–209 and T325; that span reads RGGK. ATP is bound by residues 401–403, 425–430, D516, and R531; these read GEP and DTMWQT. CoA is bound at residue S539. Residue R542 coordinates ATP. R617 contributes to the CoA binding site.

This sequence belongs to the ATP-dependent AMP-binding enzyme family.

It carries out the reaction acetate + ATP + CoA = acetyl-CoA + AMP + diphosphate. In Eremothecium gossypii (strain ATCC 10895 / CBS 109.51 / FGSC 9923 / NRRL Y-1056) (Yeast), this protein is Acetyl-coenzyme A synthetase 2 (ACS2).